Here is a 511-residue protein sequence, read N- to C-terminus: Inner membrane ABC transporter permease protein YnjC (511 aa).

The Cytoplasmic portion of the chain corresponds to 1 to 8 (MATPLRYA). The chain crosses the membrane as a helical span at residues 9–29 (LIFLLWAMVAVIYAPLIPAAL). The Periplasmic portion of the chain corresponds to 30 to 62 (TLISPALSLTHWQALFADPQLPQALLATLVSTT). In terms of domain architecture, ABC transmembrane type-1 1 spans 54–255 (LLATLVSTTI…MLLLAAYVLL (202 aa)). A helical membrane pass occupies residues 63–83 (IAAVGALLIALLVIVALWPGP). Topologically, residues 84-91 (KWQRMCAR) are cytoplasmic. The helical transmembrane segment at 92–112 (LPWLLAIPHVAFATSALLLFA) threads the bilayer. Topologically, residues 113-130 (DGGLLYDYFPYFTPPMDR) are periplasmic. Residues 131–151 (FGIGLGLTLAVKESAFLLWIL) form a helical membrane-spanning segment. The Cytoplasmic segment spans residues 152–189 (AAVLSEKWLLQQVIVLDSLGYSRWQCLNWLLLPSVAPA). A helical membrane pass occupies residues 190–210 (LAMAMLAIVAWSLSVVDVAII). The Periplasmic segment spans residues 211–239 (LGPGNPPTLAVISWQWLTQGDIDQQTKGA). Residues 240 to 260 (LASLLLMLLLAAYVLLSYLLW) traverse the membrane as a helical segment. Over 261 to 284 (RSWRRTIPRVDGVRKPATPLLPGN) the chain is Cytoplasmic. The chain crosses the membrane as a helical span at residues 285–305 (TLAIFLPLTGVLCVVLLAILA). The Periplasmic segment spans residues 306 to 318 (DQSTINSEALINS). Residues 315 to 496 (LINSLTMGLV…LLPLIIFALT (182 aa)) form the ABC transmembrane type-1 2 domain. Residues 319–339 (LTMGLVATFIALLLLLLWLEW) traverse the membrane as a helical segment. At 340–345 (GPQRRQ) the chain is on the cytoplasmic side. A helical membrane pass occupies residues 346 to 366 (LWLWLPILLPALPLVAGQYTL). At 367–374 (ALWLKLDG) the chain is on the periplasmic side. The chain crosses the membrane as a helical span at residues 375 to 395 (SWTAVVWGHLLWVMPWMLFIL). The Cytoplasmic segment spans residues 396–432 (QPAWQRIDSRLILIAQTLGWSRAKIFFYVKCPLMLRP). The chain crosses the membrane as a helical span at residues 433–453 (VLIAFAVGFAVGIAQYMPTLW). At 454–485 (LGAGRFPTLTTEAVALSSGGSNGILAAQALWQ) the chain is on the periplasmic side. The chain crosses the membrane as a helical span at residues 486–506 (LLLPLIIFALTALVAKWVGYV). Topologically, residues 507–511 (RQGLR) are cytoplasmic.

It belongs to the binding-protein-dependent transport system permease family.

It is found in the cell inner membrane. Functionally, probably part of the binding-protein-dependent transport system YnjCD. Probably responsible for the translocation of the substrate across the membrane. This is Inner membrane ABC transporter permease protein YnjC (ynjC) from Escherichia coli (strain K12).